A 583-amino-acid polypeptide reads, in one-letter code: Pentatricopeptide repeat-containing protein At3g59040 (583 aa).

10 PPR repeats span residues Ser-138–Pro-172, Asn-173–Pro-207, Ser-208–Pro-242, Asp-246–Gln-280, Ser-281–Pro-312, Asp-313–Pro-347, Thr-348–Pro-382, Asp-383–Pro-417, Asn-418–Ala-452, and Asn-453–Pro-487. A disordered region spans residues Val-525 to Leu-583. Residues Ser-528–Ala-556 show a composition bias toward acidic residues. Residues Arg-557 to Gln-566 are compositionally biased toward basic and acidic residues.

The protein belongs to the PPR family. P subfamily.

This is Pentatricopeptide repeat-containing protein At3g59040 from Arabidopsis thaliana (Mouse-ear cress).